The primary structure comprises 517 residues: ATP synthase subunit alpha 1 (517 aa).

Position 174–181 (174–181) interacts with ATP; sequence GDRQTGKT.

The protein belongs to the ATPase alpha/beta chains family. In terms of assembly, F-type ATPases have 2 components, CF(1) - the catalytic core - and CF(0) - the membrane proton channel. CF(1) has five subunits: alpha(3), beta(3), gamma(1), delta(1), epsilon(1). CF(0) has three main subunits: a(1), b(2) and c(9-12). The alpha and beta chains form an alternating ring which encloses part of the gamma chain. CF(1) is attached to CF(0) by a central stalk formed by the gamma and epsilon chains, while a peripheral stalk is formed by the delta and b chains.

The protein resides in the cell inner membrane. The enzyme catalyses ATP + H2O + 4 H(+)(in) = ADP + phosphate + 5 H(+)(out). Produces ATP from ADP in the presence of a proton gradient across the membrane. The alpha chain is a regulatory subunit. This chain is ATP synthase subunit alpha 1, found in Polaromonas naphthalenivorans (strain CJ2).